The primary structure comprises 187 residues: UPF0301 protein VSAL_I0547 (187 aa).

This sequence belongs to the UPF0301 (AlgH) family.

The sequence is that of UPF0301 protein VSAL_I0547 from Aliivibrio salmonicida (strain LFI1238) (Vibrio salmonicida (strain LFI1238)).